Reading from the N-terminus, the 111-residue chain is UPF0235 protein glr3835 (111 aa).

It belongs to the UPF0235 family.

This is UPF0235 protein glr3835 from Gloeobacter violaceus (strain ATCC 29082 / PCC 7421).